The chain runs to 166 residues: Putative signal peptidase complex catalytic subunit SEC11B (166 aa).

The Cytoplasmic segment spans residues 1–6; that stretch reads MNKWRL. The helical; Signal-anchor for type II membrane protein transmembrane segment at 7 to 24 threads the bilayer; it reads YYQVLNFGMIVSSALMIW. Topologically, residues 25–166 are extracellular; that stretch reads KGLMVITGSE…LGLFVLVHRE (142 aa). The active site involves Ser-43.

The protein belongs to the peptidase S26B family.

It localises to the membrane. It carries out the reaction Cleavage of hydrophobic, N-terminal signal or leader sequences from secreted and periplasmic proteins.. In terms of biological role, putative component of some signal peptidase complex which removes signal peptides from nascent proteins as they are translocated into the lumen of the endoplasmic reticulum. In Homo sapiens (Human), this protein is Putative signal peptidase complex catalytic subunit SEC11B (SEC11B).